The following is a 354-amino-acid chain: Methionine import ATP-binding protein MetN (354 aa).

In terms of domain architecture, ABC transporter spans 8 to 250; it reads LDHIDITFRQ…PKEALTQEFI (243 aa). An ATP-binding site is contributed by 42–49; sequence GYSGAGKS.

It belongs to the ABC transporter superfamily. Methionine importer (TC 3.A.1.24) family. In terms of assembly, the complex is composed of two ATP-binding proteins (MetN), two transmembrane proteins (MetI) and a solute-binding protein (MetQ).

The protein localises to the cell membrane. It catalyses the reaction L-methionine(out) + ATP + H2O = L-methionine(in) + ADP + phosphate + H(+). It carries out the reaction D-methionine(out) + ATP + H2O = D-methionine(in) + ADP + phosphate + H(+). Part of the ABC transporter complex MetNIQ involved in methionine import. Responsible for energy coupling to the transport system. The protein is Methionine import ATP-binding protein MetN of Streptococcus pyogenes serotype M1.